The primary structure comprises 573 residues: Probable D-xylulose kinase A (573 aa).

Substrate-binding residues include His-97, Arg-168, Asp-284, and Asn-285. ATP-binding positions include Trp-366, 471 to 472 (GG), and Asn-475.

The protein belongs to the FGGY kinase family.

It is found in the cytoplasm. The enzyme catalyses D-xylulose + ATP = D-xylulose 5-phosphate + ADP + H(+). Its function is as follows. Highly specific D-xylulose kinase which participates in the catabolism of xylose. Xylose is a major component of hemicelluloses such as xylan. Most fungi utilize D-xylose via three enzymatic reactions, xylose reductase (XR), xylitol dehydrogenase (XDH), and xylulokinase, to form xylulose 5-phosphate, which enters pentose phosphate pathway. The sequence is that of Probable D-xylulose kinase A (xkiA) from Aspergillus clavatus (strain ATCC 1007 / CBS 513.65 / DSM 816 / NCTC 3887 / NRRL 1 / QM 1276 / 107).